The sequence spans 470 residues: Probable citrate synthase, mitochondrial (470 aa).

Residues His-297, His-351, and Asp-406 contribute to the active site.

Belongs to the citrate synthase family. As to quaternary structure, homodimer.

Its subcellular location is the mitochondrion matrix. The catalysed reaction is oxaloacetate + acetyl-CoA + H2O = citrate + CoA + H(+). The protein operates within carbohydrate metabolism; tricarboxylic acid cycle; isocitrate from oxaloacetate: step 1/2. This chain is Probable citrate synthase, mitochondrial, found in Leishmania braziliensis.